Consider the following 64-residue polypeptide: Arasin 1 (64 aa).

An N-terminal signal peptide occupies residues 1–25 (MERRTLLVVLLVCSCVVAAAAEASP). Residues 22–43 (EASPSRWPSPGRPRPFPGRPKP) form a disordered region. The pro/Arg-rich region responsible for antibacterial and antifungal activity stretch occupies residues 26–48 (SRWPSPGRPRPFPGRPKPIFRPR). Pro residues predominate over residues 31-43 (PGRPRPFPGRPKP). Positions 49-62 (PCNCYAPPCPCDRW) are cystein-containing C-terminal region important for stability but not essential for antimicrobial activity. Disulfide bonds link C50–C59 and C52–C57. Positions 63 to 64 (RH) are excised as a propeptide.

Interacts with chitin through the N-terminal region (26-48). This interaction may be important, since chitin is a component of the fungal cell wall, as well as of the crab exoskeleton (permitting a possible action of arasin in wound healing in case of lesions). Disulfide bonds are important for activity especially against Gram-negative bacteria, since the linearization of the peptide causes a strong decrease of activity on these bacteria. Mainly expressed in hemocytes. No or very low expression in heart, gills, inestines, and epidermis.

In terms of biological role, antimicrobial peptide that has a large activity spectrum with activity against Gram-positive, Gram-negative bacteria, as well as against fungi. Shows activity at micromolar concentrations. Displays minimal inhibitory concentration (MIC) values lower than minimal bactericidal concentrations (MBC). Synthetic peptides with similar activities than the full length peptide (composed of the first 23 or 25 amino acids (Arasin 1(26-48) or Arasin 1(26-50))) may have a dual mode of action depending on the peptide concentrations. At MIC concentrations, the peptide penetrates into the cytoplasm of target cells (tested on the Gram-negative E.coli). The two inner membrane proteins YgdD and SbmA may be required for this uptake. At concentrations higher than MIC, arasin may act by disrupting membranes. Full-length and N-terminal peptides do not show hemolytic activity. The protein is Arasin 1 of Hyas araneus (Atlantic lyre crab).